Reading from the N-terminus, the 346-residue chain is Dihydroorotase (346 aa).

Residues His-14 and His-16 each contribute to the Zn(2+) site. Residues 16–18 (HLR) and Asn-42 contribute to the substrate site. The Zn(2+) site is built by Lys-100, His-137, and His-175. The residue at position 100 (Lys-100) is an N6-carboxylysine. His-137 is a substrate binding site. Residue Leu-220 coordinates substrate. Residue Asp-248 participates in Zn(2+) binding. The active site involves Asp-248. 2 residues coordinate substrate: His-252 and Ala-264.

Belongs to the metallo-dependent hydrolases superfamily. DHOase family. Class II DHOase subfamily. Homodimer. It depends on Zn(2+) as a cofactor.

The catalysed reaction is (S)-dihydroorotate + H2O = N-carbamoyl-L-aspartate + H(+). Its pathway is pyrimidine metabolism; UMP biosynthesis via de novo pathway; (S)-dihydroorotate from bicarbonate: step 3/3. Its function is as follows. Catalyzes the reversible cyclization of carbamoyl aspartate to dihydroorotate. This is Dihydroorotase from Ruegeria sp. (strain TM1040) (Silicibacter sp.).